We begin with the raw amino-acid sequence, 350 residues long: sn-1 oleoyl-lipid 12-desaturase (350 aa).

2 helical membrane-spanning segments follow: residues 41 to 61 and 64 to 84; these read AWTQ…SLAI and WFLL…FFVI. Residues 86 to 90 carry the Histidine box-1 motif; that stretch reads HDCGH. The chain crosses the membrane as a helical span at residues 98–118; that stretch reads WVNDLVGHIFMMPLIYPFHSW. A Histidine box-2 motif is present at residues 122–126; sequence HNHHH. A run of 2 helical transmembrane segments spans residues 196 to 216 and 219 to 239; these read VAVV…TTGI and FVKF…TFTI. The short motif at 287–291 is the Histidine box-3 element; that stretch reads HHLST.

Belongs to the fatty acid desaturase type 2 family. Fe(2+) serves as cofactor.

It is found in the membrane. The catalysed reaction is a 1-[(9Z)-octadecenoyl]-2-acyl-glycerolipid + 2 reduced [2Fe-2S]-[ferredoxin] + O2 + 2 H(+) = a 1-[(9Z,12Z)-octadecdienoyl]-2-acyl-glycerolipid + 2 oxidized [2Fe-2S]-[ferredoxin] + 2 H2O. The protein operates within lipid metabolism; polyunsaturated fatty acid biosynthesis. Desaturase involved in fatty acid biosynthesis. Introduces a double bond at carbon 12 of oleoyl groups (18:1) attached to the sn-1 position of the glycerol moiety of membrane glycerolipids. The sequence is that of sn-1 oleoyl-lipid 12-desaturase from Anabaena variabilis.